The primary structure comprises 468 residues: MVLSDILFSIYEHREKSPVFSWFAYLLRILDWIIQFLSFGLIPSIGGDLYDLVDNGLFKFVLDRNIQKKQNQLYDKFRLGTVKMCLVFDGELTKKLLLDNSIRRGGLYNLLTKFFGKGIFTSNIHSRWMKQRKAIFKLFSPQNLIQITPELTTSMFEELDRLITIKKDLDLVTVLSLIGLVGFCKVIFGVDVTDMSEELIEPLNDLLIYINGAVEPVLITADPSYRRFITNKKFVHNWMRKLIDKARKSENCFEIMRQQLDDIGSDDETELIEFILSVVLGGHETTARLMLGIIYSVCHNKEIIEKLNNETDEYPKGDYINLKKRPYLNNIIKEGTRLFPPVWLLSREAKNDTTIDNHFFKKGTQFLISPLIILRDYNVWGSNAEKFDPERFSNMDPKSKASKLYIPFIVGSEDCPGKKFAILESAIVVSKLFKEYEITVLKHKLNPMSAGTFRLSDKLPVSIKKLKN.

The next 2 membrane-spanning stretches (helical) occupy residues 22–42 (WFAY…FGLI) and 172–192 (VTVL…GVDV). Cys415 is a heme binding site.

This sequence belongs to the cytochrome P450 family. Requires heme as cofactor.

It is found in the host membrane. Its subcellular location is the virion. The sequence is that of Cytochrome P450-like protein L532 from Acanthamoeba polyphaga mimivirus (APMV).